The primary structure comprises 741 residues: MNAPDKTGTRRRAIPAAVDLDALIRAEHRDPFSILGPHGDGGSGQYVRAYLPAALSVRLLARDDGRELGEMEMSEVPGFFVGHLEHPQPYLLKINWAGGEQITEDPYSFGPLLGEMDLYLFAEGNHRDLSSCLGAQVTSVDGVDGVRFAVWAPNARRVSVVGSFNSWDGRRHPMRMRHPTGVWEIFVPRLQPGEVYKYEILGAHGILPLKSDPMALSTTLPPDTASKIAAPLQFEWNDQEWLQSRAGRHEVTAPLSIYELHAGSWQMEQVEDNQWRQYNWRELADRLIPYVKELGFTHIELMPIMEHPFGGSWGYQLLAQFAPTARYGSPEDFAFFVDACHRAEIGVILDWVPAHFPTDTHGLAQFDGTCLYEYADPKEGFHQDWNTLIYNLGRTEVHGFMLASALHWLKHYHIDGLRVDAVASMLYRDYSRNAGEWVTNRFGGRENLEAIDFLRHLNDVVALEAPGTMVIAEESTAWPGVSEPTQQGGLGFNYKWNMGWMHDSLQYMEEDPINRGHHHGKLSFSLVYAWSERFVLPISHDEVVHGKHSLIDKMPGDRWQKFANLRAYLSFMWTHPGKKLLFMGCEFGQWREWNHDRELDWYLMQYAEHVGVKNLVGDLNRLYREEKALHERDADPAGFQWLVGDDSANSVFAYLRWSNDGEPLLVVANMTPVPRLDYRLGAPMRGAWTELLNSDAETYAGSNFGNGGEVMTEAEPAHGMEDSLVLNLPPLAVLILKPKKD.

Catalysis depends on D420, which acts as the Nucleophile. E473 serves as the catalytic Proton donor.

It belongs to the glycosyl hydrolase 13 family. GlgB subfamily. As to quaternary structure, monomer.

It catalyses the reaction Transfers a segment of a (1-&gt;4)-alpha-D-glucan chain to a primary hydroxy group in a similar glucan chain.. Its pathway is glycan biosynthesis; glycogen biosynthesis. In terms of biological role, catalyzes the formation of the alpha-1,6-glucosidic linkages in glycogen by scission of a 1,4-alpha-linked oligosaccharide from growing alpha-1,4-glucan chains and the subsequent attachment of the oligosaccharide to the alpha-1,6 position. The sequence is that of 1,4-alpha-glucan branching enzyme GlgB from Pseudomonas syringae pv. syringae (strain B728a).